Reading from the N-terminus, the 185-residue chain is UPF0301 protein Csal_0058 (185 aa).

It belongs to the UPF0301 (AlgH) family.

This is UPF0301 protein Csal_0058 from Chromohalobacter salexigens (strain ATCC BAA-138 / DSM 3043 / CIP 106854 / NCIMB 13768 / 1H11).